Reading from the N-terminus, the 365-residue chain is Serine/threonine-protein kinase SAPK6 (365 aa).

Residues tyrosine 4 to phenylalanine 260 enclose the Protein kinase domain. Residues isoleucine 10–alanine 18 and lysine 33 each bind ATP. Aspartate 123 functions as the Proton acceptor in the catalytic mechanism. The tract at residues valine 298–serine 365 is disordered. The span at threonine 317–aspartate 347 shows a compositional bias: acidic residues.

This sequence belongs to the protein kinase superfamily. Ser/Thr protein kinase family. Interacts with BZIP46. May be phosphorylated. Expressed in leaf blades and leaf sheaths. Expressed in shoots and roots of young seedlings.

It carries out the reaction L-seryl-[protein] + ATP = O-phospho-L-seryl-[protein] + ADP + H(+). The catalysed reaction is L-threonyl-[protein] + ATP = O-phospho-L-threonyl-[protein] + ADP + H(+). With respect to regulation, activated by hyperosmotic stress. Functionally, may play a role in signal transduction of hyperosmotic response. Can phosphorylate ABI5 in vitro. Can phosphorylate BZIP46 in vitro. This is Serine/threonine-protein kinase SAPK6 from Oryza sativa subsp. japonica (Rice).